A 79-amino-acid chain; its full sequence is Small ribosomal subunit protein uS17 (79 aa).

Belongs to the universal ribosomal protein uS17 family. Part of the 30S ribosomal subunit.

One of the primary rRNA binding proteins, it binds specifically to the 5'-end of 16S ribosomal RNA. The sequence is that of Small ribosomal subunit protein uS17 from Paramagnetospirillum magneticum (strain ATCC 700264 / AMB-1) (Magnetospirillum magneticum).